The following is a 150-amino-acid chain: Deoxyuridine 5'-triphosphate nucleotidohydrolase (150 aa).

Substrate-binding positions include 69–71 (RSG), Asn-82, and 86–88 (LID).

It belongs to the dUTPase family. Mg(2+) serves as cofactor.

The catalysed reaction is dUTP + H2O = dUMP + diphosphate + H(+). It participates in pyrimidine metabolism; dUMP biosynthesis; dUMP from dCTP (dUTP route): step 2/2. Functionally, this enzyme is involved in nucleotide metabolism: it produces dUMP, the immediate precursor of thymidine nucleotides and it decreases the intracellular concentration of dUTP so that uracil cannot be incorporated into DNA. The protein is Deoxyuridine 5'-triphosphate nucleotidohydrolase of Methylobacillus flagellatus (strain ATCC 51484 / DSM 6875 / VKM B-1610 / KT).